A 343-amino-acid polypeptide reads, in one-letter code: S-adenosylmethionine:tRNA ribosyltransferase-isomerase (343 aa).

The protein belongs to the QueA family. As to quaternary structure, monomer.

It localises to the cytoplasm. It carries out the reaction 7-aminomethyl-7-carbaguanosine(34) in tRNA + S-adenosyl-L-methionine = epoxyqueuosine(34) in tRNA + adenine + L-methionine + 2 H(+). It participates in tRNA modification; tRNA-queuosine biosynthesis. Transfers and isomerizes the ribose moiety from AdoMet to the 7-aminomethyl group of 7-deazaguanine (preQ1-tRNA) to give epoxyqueuosine (oQ-tRNA). This chain is S-adenosylmethionine:tRNA ribosyltransferase-isomerase, found in Stenotrophomonas maltophilia (strain R551-3).